Reading from the N-terminus, the 135-residue chain is Helix-loop-helix protein 2 (135 aa).

The interval 1–80 (MMLSPDQAAD…RRRATAKYRS (80 aa)) is disordered. Residues 10-21 (DSDHPSSAHSDP) are compositionally biased toward basic and acidic residues. Residues 68–80 (KRRRRRATAKYRS) show a composition bias toward basic residues. Positions 77 to 129 (KYRSAHATRERIRVEAFNLAFAELRKLLPTLPPDKKLSKIEILRLAICYISYL) constitute a bHLH domain.

Homodimer. Interacts and may form heterodimers with STAT3.

The protein resides in the nucleus. Functionally, transcription factor which binds the E box motif 5'-CA[TC][AG]TG-3'. Involved in regulating energy expenditure, body mass, voluntary physical activity, mating behavior and reproductive longevity, acting through the hypothalamic-pituitary-gonadal axis. Acts as a transcriptional activator of target genes, including NDN, PCSK1, MC4R. Is also a transcriptional activator of KISS1. May act centrally to regulate function of both white and brown adipose tissue. Together with NHLH1, required to maintain migration and survival of cells in the anterior extramural migration stream (aes), which forms the precerebellar nuclei. Also, in concert with NHLH1, may determine fate of gonadotropin releasing hormone-1 (GnRH-1) neurons. The chain is Helix-loop-helix protein 2 (NHLH2) from Homo sapiens (Human).